The chain runs to 124 residues: uncharacterized protein (124 aa).

The segment at 82 to 124 is disordered; that stretch reads SDLGIEGGERAQGQNAHSVHGPGLQTERGGSQLQMVGHPLREL.

This is an uncharacterized protein from Human cytomegalovirus (strain AD169) (HHV-5).